The sequence spans 402 residues: DNA polymerase IV (402 aa).

The UmuC domain occupies 5 to 187 (ILLADMNSFY…LPVRELFGVG (183 aa)). Residues aspartate 9 and aspartate 105 each contribute to the Mg(2+) site. The active site involves glutamate 106.

The protein belongs to the DNA polymerase type-Y family. Monomer. The cofactor is Mg(2+).

The protein localises to the cytoplasm. The enzyme catalyses DNA(n) + a 2'-deoxyribonucleoside 5'-triphosphate = DNA(n+1) + diphosphate. Its function is as follows. Poorly processive, error-prone DNA polymerase involved in untargeted mutagenesis. Copies undamaged DNA at stalled replication forks, which arise in vivo from mismatched or misaligned primer ends. These misaligned primers can be extended by PolIV. Exhibits no 3'-5' exonuclease (proofreading) activity. May be involved in translesional synthesis, in conjunction with the beta clamp from PolIII. The protein is DNA polymerase IV of Pelotomaculum thermopropionicum (strain DSM 13744 / JCM 10971 / SI).